Consider the following 861-residue polypeptide: MRMCAPVRGLFLALVVVLRTAVAFAPVPRLTWEHGEVGLVQFHKPGIFNYSALLMSEDKDTLYVGAREAVFAVNALNISEKQHEVYWKVSEDKKSKCAEKGKSKQTECLNYIRVLQPLSSTSLYVCGTNAFQPTCDHLNLTSFKFLGKSEDGKGRCPFDPAHSYTSVMVGGELYSGTSYNFLGSEPIISRNSSHSPLRTEYAIPWLNEPSFVFADVIQKSPDGPEGEDDKVYFFFTEVSVEYEFVFKLMIPRVARVCKGDQGGLRTLQKKWTSFLKARLICSKPDSGLVFNILQDVFVLRAPGLKEPVFYAVFTPQLNNVGLSAVCAYTLATVEAVFSRGKYMQSATVEQSHTKWVRYNGPVPTPRPGACIDSEARAANYTSSLNLPDKTLQFVKDHPLMDDSVTPIDNRPKLIKKDVNYTQIVVDRTQALDGTFYDVMFISTDRGALHKAVILTKEVHVIEETQLFRDSEPVLTLLLSSKKGRKFVYAGSNSGVVQAPLAFCEKHGSCEDCVLARDPYCAWSPAIKACVTLHQEEASSRGWIQDMSGDTSSCLDKSKESFNQHFFKHGGTAELKCFQKSNLARVVWKFQNGELKAASPKYGFVGRKHLLIFNLSDGDSGVYQCLSEERVRNKTVSQLLAKHVLEVKMVPRTPPSPTSEDAQTEGSKITSKMPVASTQGSSPPTPALWATSPRAATLPPKSSSGTSCEPKMVINTVPQLHSEKTVYLKSSDNRLLMSLLLFIFVLFLCLFSYNCYKGYLPGQCLKFRSALLLGKKTPKSDFSDLEQSVKETLVEPGSFSQQNGDHPKPALDTGYETEQDTITSKVPTDREDSQRIDELSARDKPFDVKCELKFADSDADGD.

Residues 1–23 (MRMCAPVRGLFLALVVVLRTAVA) form the signal peptide. The region spanning 24–500 (FAPVPRLTWE…SNSGVVQAPL (477 aa)) is the Sema domain. Residues 24-733 (FAPVPRLTWE…TVYLKSSDNR (710 aa)) are Extracellular-facing. Residues asparagine 49 and asparagine 77 are each glycosylated (N-linked (GlcNAc...) asparagine). Cystine bridges form between cysteine 97-cysteine 108 and cysteine 126-cysteine 135. N-linked (GlcNAc...) asparagine glycans are attached at residues asparagine 139 and asparagine 191. 2 disulfides stabilise this stretch: cysteine 257–cysteine 370 and cysteine 281–cysteine 326. N-linked (GlcNAc...) asparagine glycosylation is found at asparagine 379 and asparagine 419. The region spanning 502–551 (FCEKHGSCEDCVLARDPYCAWSPAIKACVTLHQEEASSRGWIQDMSGDTS) is the PSI domain. Intrachain disulfides connect cysteine 503-cysteine 520, cysteine 509-cysteine 553, cysteine 512-cysteine 529, and cysteine 576-cysteine 624. The region spanning 555–636 (DKSKESFNQH…EERVRNKTVS (82 aa)) is the Ig-like C2-type domain. Residues asparagine 613 and asparagine 632 are each glycosylated (N-linked (GlcNAc...) asparagine). The disordered stretch occupies residues 649–709 (VPRTPPSPTS…KSSSGTSCEP (61 aa)). Positions 657–681 (TSEDAQTEGSKITSKMPVASTQGSS) are enriched in polar residues. The helical transmembrane segment at 734-754 (LLMSLLLFIFVLFLCLFSYNC) threads the bilayer. At 755–861 (YKGYLPGQCL…KFADSDADGD (107 aa)) the chain is on the cytoplasmic side. 2 positions are modified to phosphoserine: serine 782 and serine 832. Positions 793–839 (VEPGSFSQQNGDHPKPALDTGYETEQDTITSKVPTDREDSQRIDELS) are disordered. Residues 826–839 (PTDREDSQRIDELS) show a composition bias toward basic and acidic residues.

The protein belongs to the semaphorin family. As to quaternary structure, homodimer. Interacts with PLXNB1. Interacts with PLXNB2. As to expression, strongly expressed in lymphoid tissues, especially in the thymus, as well as in the nervous tissues. Expressed in neurons and glia in the developing hippocampus.

It localises to the cell membrane. In terms of biological role, cell surface receptor for PLXNB1 and PLXNB2 that plays an important role in cell-cell signaling. Regulates GABAergic synapse development. Promotes the development of inhibitory synapses in a PLXNB1-dependent manner. Modulates the complexity and arborization of developing neurites in hippocampal neurons by activating PLXNB1 and interaction with PLXNB1 mediates activation of RHOA. Promotes the migration of cerebellar granule cells. Plays a role in the immune system; induces B-cells to aggregate and improves their viability (in vitro). Induces endothelial cell migration through the activation of PTK2B/PYK2, SRC, and the phosphatidylinositol 3-kinase-AKT pathway. In Mus musculus (Mouse), this protein is Semaphorin-4D (Sema4d).